The following is a 529-amino-acid chain: MQQRRPVRRALLSVSDKAGIIEFAQALSARGVELLSTGGTARLLAEKGLPVTEVSDYTGFPEMMDGRVKTLHPKVHGGILGRRGQDDAIMEQHHIAPIDMVVVNLYPFAETVAREGCSLADAVENIDIGGPTMVRSAAKNHKDVAIVVKSSDYDAIIKEMDANEGSLTLDTRFDLAIKAFEHTAAYDSMIANYFGSMVPAYHGESKEAAGRFPRTLNLNFIKKQDMRYGENSHQQAAFYIEENVKEASVATAQQIQGKALSYNNIADTDAALECVKEFNEPACVIVKHANPCGVAVSTSILDAYDRAYKTDPTSAFGGIIAFNRELDAETAQAIISRQFVEVLIAPSASEEALKITSAKQNVRVLTCGQWASRVPGLDFKRVNGGLLVQDRDLGMVSEAELRVVSKRQPTEQELRDALFCWKVAKFVKSNAIVYAKENMTIGIGAGQMSRVYSAKIASIKAADEGLEVKGSAMASDAFFPFRDGIDAAAAVGVSCVIQPGGSIRDDEVIAAADEHGIAMIFTDMRHFRH.

The MGS-like domain maps to 1 to 148 (MQQRRPVRRA…KNHKDVAIVV (148 aa)).

This sequence belongs to the PurH family.

The enzyme catalyses (6R)-10-formyltetrahydrofolate + 5-amino-1-(5-phospho-beta-D-ribosyl)imidazole-4-carboxamide = 5-formamido-1-(5-phospho-D-ribosyl)imidazole-4-carboxamide + (6S)-5,6,7,8-tetrahydrofolate. The catalysed reaction is IMP + H2O = 5-formamido-1-(5-phospho-D-ribosyl)imidazole-4-carboxamide. It participates in purine metabolism; IMP biosynthesis via de novo pathway; 5-formamido-1-(5-phospho-D-ribosyl)imidazole-4-carboxamide from 5-amino-1-(5-phospho-D-ribosyl)imidazole-4-carboxamide (10-formyl THF route): step 1/1. The protein operates within purine metabolism; IMP biosynthesis via de novo pathway; IMP from 5-formamido-1-(5-phospho-D-ribosyl)imidazole-4-carboxamide: step 1/1. This Salmonella typhi protein is Bifunctional purine biosynthesis protein PurH.